The following is a 200-amino-acid chain: Serine/arginine-rich splicing factor RSZ22 (200 aa).

The region spanning 2–71 (SRVYVGNLDP…NGWRVEQSHN (70 aa)) is the RRM domain. Positions 62 to 83 (NGWRVEQSHNRGERGGGGRGGD) are enriched in basic and acidic residues. 2 disordered regions span residues 62–97 (NGWRVEQSHNRGERGGGGRGGDRGGGGGGRGGRGGS) and 112–200 (RECR…RSRS). Residues 84 to 96 (RGGGGGGRGGRGG) are compositionally biased toward gly residues. A CCHC-type zinc finger spans residues 99–116 (LKCYECGETGHFARECRN). Residues 120-137 (TGRRRSKSRSRTPPRYRR) show a composition bias toward basic residues. Phosphoserine occurs at positions 138, 147, 152, 160, 162, 174, and 200. Low complexity predominate over residues 138-150 (SPSYGRRSYSPRA). Residues 151–166 (RSPPPPRRRSPSPPPA) show a composition bias toward pro residues.

The protein belongs to the splicing factor SR family. RSZ subfamily. As to quaternary structure, component of the spliceosome. Interacts with AFC2, RS2Z33 and RNU1. Extensively phosphorylated on serine residues in the RS domain. Phosphorylated by AFC2. As to expression, expressed in primary and lateral roots, stems, petioles, abaxial and adaxial epidermis cells, trichomes, unopened flowers, anther filaments, anthers, stigma, pollen, pollen tube, ovule funiculi, integuments, embryo sac and developing seeds.

It is found in the nucleus speckle. The protein localises to the nucleus. The protein resides in the nucleolus. It localises to the nucleoplasm. Its subcellular location is the cytoplasm. In terms of biological role, sequence-specific RNA-binding protein probably involved in pre-mRNA splicing. In vitro, can complement efficiently splicing-deficient mammalian SRSF7-depleted HeLa cell extract. This Arabidopsis thaliana (Mouse-ear cress) protein is Serine/arginine-rich splicing factor RSZ22 (RSZ22).